Consider the following 114-residue polypeptide: MSLLSSRAARVPGPSSSLCALLVLLLLLTQPGPIASAGPAAAVLRELRCVCLQTTQGVHPKMISNLQVFAIGPQCSKVEVVASLKNGKEICLDPEAPFLKKVIQKILDGGNKEN.

The first 36 residues, methionine 1–serine 36, serve as a signal peptide directing secretion. Intrachain disulfides connect cysteine 49–cysteine 75 and cysteine 51–cysteine 91.

The protein belongs to the intercrine alpha (chemokine CxC) family. Monomer. Homodimer. Post-translationally, N-terminal processed forms ENA-78(8-78) and ENA-78(9-78) are produced by proteolytic cleavage after secretion from peripheral blood monocytes.

The protein resides in the secreted. Involved in neutrophil activation. In vitro, ENA-78(8-78) and ENA-78(9-78) show a threefold higher chemotactic activity for neutrophil granulocytes. In Homo sapiens (Human), this protein is C-X-C motif chemokine 5 (CXCL5).